Consider the following 514-residue polypeptide: FAD-dependent monooxygenase CPUR_05423 (514 aa).

Valine 79 and arginine 146 together coordinate FAD. Arginine 227 is a catalytic residue. Aspartate 358 and glycine 371 together coordinate FAD.

Belongs to the paxM FAD-dependent monooxygenase family. It depends on FAD as a cofactor.

It participates in pigment biosynthesis. Its function is as follows. FAD-dependent monooxygenase; part of the ergochrome gene cluster responsible for the typical purple-black color of the ergot sclerotia. The ergochrome gene cluster produces several ergot pigments including the yellow ergochrome secalonic acid and its derivatives, as well as the red anthraquinones endocrocin and clavorubin. The pathway begins with the synthesis of atrochrysone thioester by the polyketide synthase (PKS) CPUR_05437. The atrochrysone carboxyl ACP thioesterase CPUR_05436 then breaks the thioester bond and releases the atrochrysone carboxylic acid from CPUR_05437. The atrochrysone carboxylic acid is then converted to atrochrysone which is further transformed into emodin anthrone. The next step is performed by the anthrone oxygenase CPUR_05434 that catalyzes the oxidation of emodinanthrone to emodin. Emodin is further modified to yield monodictyphenone via several steps involving CPUR_05427, CPUR_05428, CPUR_05429 and CPUR_05430. The short chain dehydrogenase/reductase CPUR_05418 then catalyzes the C-5 ketoreduction to give the xanthone skeleton of the monomeric units. Ergochromes formation requires further dimerization steps of different xanthone units, probably catalyzed by the cytochrome P450 monooxygenase CPUR_05419. CPUR_05425, CPUR_05426 and CPUR_05431 are unique to Claviceps, thus it is likely that they are involved in further modification of xanthone units or in their dimerization. The yellow ergochromes and the red anthraquinone pigments endocrocin and clavorubin are products from the same PKS derived precursors and the latter are likely shunt products in the pathway of xanthone biosynthesis. It is proposed that atrochrysone carboxylic acid released from the PKS CPUR_05437 can also be converted to endocrocin anthrone which is further oxidized into endocrocin by CPUR_05435. Endocrocin could be then modified to clavorubin, possibly by CPUR_05423 and CPUR_05431. Clavorubin is the principal anthraquinone metabolite produced by the cluster with a much higher yield compared to endocrocin. The sequence is that of FAD-dependent monooxygenase CPUR_05423 from Claviceps purpurea (strain 20.1) (Ergot fungus).